A 184-amino-acid chain; its full sequence is Photosystem I assembly protein Ycf4 (184 aa).

A run of 2 helical transmembrane segments spans residues 22 to 42 (FCWA…GTSS) and 57 to 77 (ILFF…LFIS).

Belongs to the Ycf4 family.

The protein resides in the plastid. It is found in the chloroplast thylakoid membrane. In terms of biological role, seems to be required for the assembly of the photosystem I complex. The protein is Photosystem I assembly protein Ycf4 of Panax ginseng (Korean ginseng).